A 343-amino-acid chain; its full sequence is Flavone 3'-O-methyltransferase OMT2 (343 aa).

(E)-ferulate is bound at residue N107. Residues G184, D207, D227, M228, M240, and K241 each contribute to the S-adenosyl-L-homocysteine site. H245 serves as the catalytic Proton acceptor. Position 246 (D246) interacts with (E)-5-hydroxyferulate. Catalysis depends on residues E273 and E305.

Belongs to the class I-like SAM-binding methyltransferase superfamily. Cation-independent O-methyltransferase family. COMT subfamily. In terms of assembly, homodimer.

The catalysed reaction is (E)-5-hydroxyferulate + S-adenosyl-L-methionine = (E)-sinapate + S-adenosyl-L-homocysteine + H(+). It carries out the reaction luteolin + S-adenosyl-L-methionine = chrysoeriol + S-adenosyl-L-homocysteine + H(+). The enzyme catalyses quercetin + S-adenosyl-L-methionine = isorhamnetin + S-adenosyl-L-homocysteine + H(+). It catalyses the reaction (E)-caffeate + S-adenosyl-L-methionine = (E)-ferulate + S-adenosyl-L-homocysteine + H(+). The catalysed reaction is a 3'-hydroxyflavone + S-adenosyl-L-methionine = a 3'-methoxyflavone + S-adenosyl-L-homocysteine + H(+). Its pathway is flavonoid metabolism. Its function is as follows. Catalyzes the 3'-O-methylation of the flavonoids luteolin and quercetin. Catalyzes the 3- of 5-O-methylation of the phenylpropanoids caffeate and 5-hydroxyferulate. Substrate preference is 5-hydroxyferulate &gt; luteolin &gt; quercetin &gt; caffeate. Apigenin, kempferol and 3,4-dimethylquercetin do not seem to be substrates for methylation. This Chrysosplenium americanum (American golden saxifrage) protein is Flavone 3'-O-methyltransferase OMT2.